Here is a 409-residue protein sequence, read N- to C-terminus: Nucleoprotein (409 aa).

4 disordered regions span residues 1–31 (MASG…GSSG), 44–84 (LNSP…KGGR), 164–196 (RSGR…EDDL), and 238–258 (VDQV…DDKM). Residues 15-31 (PVIKLGGPKPPKVGSSG) are compositionally biased toward low complexity. The segment at 29 to 160 (SSGNVSWFQA…GNFRWDFIPL (132 aa)) is RNA-binding. Positions 31–156 (GNVSWFQAIK…GGPDGNFRWD (126 aa)) constitute a CoV N NTD domain. Residues 70 to 84 (YWRRQARFKPGKGGR) are compositionally biased toward basic residues. Over residues 166-179 (GRSTAASSAASSRA) the composition is skewed to low complexity. 2 stretches are compositionally biased toward basic and acidic residues: residues 180-192 (PSRE…RSGS) and 247-258 (KGKEGNFGDDKM). Phosphoserine; by host occurs at positions 190 and 192. The region spanning 215–331 (TKAKADEMAH…QCVDGVGTRP (117 aa)) is the CoV N CTD domain. Positions 226 to 333 (RYCKRTIPPN…VDGVGTRPKD (108 aa)) are dimerization. Cysteine 320 and cysteine 323 are disulfide-bonded. The tract at residues 326-409 (GVGTRPKDDE…GDSALGENEL (84 aa)) is disordered. Positions 358–367 (QRPKKEKKPK) are enriched in basic residues. Over residues 368–384 (KQDDEVDKALTSDEERN) the composition is skewed to basic and acidic residues. Threonine 378 bears the Phosphothreonine; by host mark. Serine 379 carries the phosphoserine; by host modification.

It belongs to the gammacoronavirus nucleocapsid protein family. In terms of assembly, homooligomer. Both monomeric and oligomeric forms interact with RNA. Interacts with protein M. Interacts with NSP3; this interaction serves to tether the genome to the newly translated replicase-transcriptase complex at a very early stage of infection. Post-translationally, ADP-ribosylated. The ADP-ribosylation is retained in the virion during infection. In terms of processing, phosphorylated on serine and threonine residues.

It is found in the virion. The protein resides in the host endoplasmic reticulum-Golgi intermediate compartment. It localises to the host Golgi apparatus. In terms of biological role, packages the positive strand viral genome RNA into a helical ribonucleocapsid (RNP) and plays a fundamental role during virion assembly through its interactions with the viral genome and membrane protein M. Plays an important role in enhancing the efficiency of subgenomic viral RNA transcription as well as viral replication. The protein is Nucleoprotein of Gallus gallus (Chicken).